Consider the following 328-residue polypeptide: D-cysteine desulfhydrase (328 aa).

N6-(pyridoxal phosphate)lysine is present on lysine 51.

The protein belongs to the ACC deaminase/D-cysteine desulfhydrase family. As to quaternary structure, homodimer. It depends on pyridoxal 5'-phosphate as a cofactor.

The enzyme catalyses D-cysteine + H2O = hydrogen sulfide + pyruvate + NH4(+) + H(+). Its function is as follows. Catalyzes the alpha,beta-elimination reaction of D-cysteine and of several D-cysteine derivatives. It could be a defense mechanism against D-cysteine. In Escherichia coli O157:H7, this protein is D-cysteine desulfhydrase.